The sequence spans 241 residues: Triosephosphate isomerase (241 aa).

Residue 9 to 11 participates in substrate binding; the sequence is NWK. Histidine 96 acts as the Electrophile in catalysis. Glutamate 165 acts as the Proton acceptor in catalysis. Substrate is bound by residues glycine 171, serine 204, and 225-226; that span reads GG.

Belongs to the triosephosphate isomerase family. As to quaternary structure, homodimer.

Its subcellular location is the cytoplasm. The catalysed reaction is D-glyceraldehyde 3-phosphate = dihydroxyacetone phosphate. It functions in the pathway carbohydrate biosynthesis; gluconeogenesis. It participates in carbohydrate degradation; glycolysis; D-glyceraldehyde 3-phosphate from glycerone phosphate: step 1/1. In terms of biological role, involved in the gluconeogenesis. Catalyzes stereospecifically the conversion of dihydroxyacetone phosphate (DHAP) to D-glyceraldehyde-3-phosphate (G3P). This chain is Triosephosphate isomerase, found in Prochlorococcus marinus subsp. pastoris (strain CCMP1986 / NIES-2087 / MED4).